A 316-amino-acid chain; its full sequence is Ninja-family protein 2 (316 aa).

Disordered stretches follow at residues 1-29 (MASR…GEPD) and 72-236 (TSDD…TSTG). Residues 99-108 (ERWRRREMQS) show a composition bias toward basic and acidic residues. Over residues 156–166 (DQGNTSSSMPE) the composition is skewed to polar residues. Composition is skewed to low complexity over residues 179 to 199 (SSME…QNKS) and 222 to 235 (LRTL…TTST).

Belongs to the Ninja family.

The protein localises to the nucleus. The protein is Ninja-family protein 2 (AFP-B1) of Triticum aestivum (Wheat).